A 107-amino-acid chain; its full sequence is Protein phosphatase 1 regulatory subunit INH3 (107 aa).

Low complexity predominate over residues 1 to 14 (MSTATRPSSSATTS). Disordered stretches follow at residues 1 to 40 (MSTA…KKKK) and 69 to 107 (PFDE…KAVD). Acidic residues predominate over residues 71–80 (DEDDSEEEDD). The segment covering 81–94 (NNHHCDHNHEHSES) has biased composition (basic and acidic residues). The span at 95 to 107 (GEASSSNDSKAVD) shows a compositional bias: low complexity.

In terms of assembly, interacts with protein phosphatase 1. Expressed in roots, cotyledons, leaves, flowers and embryos.

Inhibitor of protein-phosphatase 1 (PP1). Binds to and inhibits PP1 activity. Required for early embryogenesis progression. This chain is Protein phosphatase 1 regulatory subunit INH3, found in Arabidopsis thaliana (Mouse-ear cress).